The following is a 527-amino-acid chain: MTDTAAQRHHRLQAHADLLTQTLRGIEKEGLRVDHQGVLARTAHPAGLGAALTNAHVTTDYSEALLELITGTHTEVDSLLGELRDTHRYVYGVLEGEYIWNQSMPATLPPEADIPIAWYGTSNTGMLKHVYRRGLAERYGKTMQCIAGVHYNFSLPDALWDVLVPDAPTPQARRSRGYISLIRNFTRYSWLLMYLFGSAPALAREFMRGRDHLLETLDPSTLYLPYATSLRMSDLGYQNKAQSRLKLCYNDLDTFLGRLYEAVTEPWPAYQAIGTRRDGQWIQLNTNVLQIENEYYSSIRPKRATGRCERPITALAERGVQYVEVRCLDIDPLTPEGISAETARFVDAFLLFCATSDSPFFPDNGYCQRSADNFAVVVKEGRKPGLMLDREGQAVSVPQWGHELLDQIAPYAALYDQALGGDAYAAALAAQRAKLDQPDLTPSARVLAALREGNVSFHDYSLDLSRRHADALRAQPLPAERTQAYAEAARQSVAEQLRLEQSDAVDFDTYVAHYHAALKNPLPSTAS.

It belongs to the glutamate--cysteine ligase type 1 family. Type 1 subfamily.

The catalysed reaction is L-cysteine + L-glutamate + ATP = gamma-L-glutamyl-L-cysteine + ADP + phosphate + H(+). It participates in sulfur metabolism; glutathione biosynthesis; glutathione from L-cysteine and L-glutamate: step 1/2. In Bordetella parapertussis (strain 12822 / ATCC BAA-587 / NCTC 13253), this protein is Glutamate--cysteine ligase.